Reading from the N-terminus, the 320-residue chain is Olfactory receptor 2T12 (320 aa).

Topologically, residues 1–23 (MEMRNTTPDFILLGLFNHTRAHQ) are extracellular. Asn-17 carries N-linked (GlcNAc...) asparagine glycosylation. Residues 24 to 47 (VLFMMLLATVLTSLFSNALMILLI) traverse the membrane as a helical segment. Residues 48–55 (HWDHRLHR) lie on the Cytoplasmic side of the membrane. A helical membrane pass occupies residues 56-77 (PMYFLLSQLSLMDMMLVSTTVP). Over 78-98 (KMAADYLTGNKAISRAGCGVQ) the chain is Extracellular. Residues Cys-95 and Cys-187 are joined by a disulfide bond. Residues 99-118 (IFFLPTLGGGECFLLAAMAY) traverse the membrane as a helical segment. Topologically, residues 119–137 (DRYAAVCHPLRYPTLMSWQ) are cytoplasmic. A helical transmembrane segment spans residues 138–156 (LCLRMTMSSWLLGAADGLL). Topologically, residues 157 to 193 (QAVATLSFPYCGAHEIDHFFCEAPVLVRLACADTSVF) are extracellular. Residues 194–217 (ENAMYICCVLMLLVPFSLILSSYG) traverse the membrane as a helical segment. The Cytoplasmic portion of the chain corresponds to 218–234 (LILAAVLLMRSTEARKK). Residues 235-257 (AFATCSSHVAVVGLFYGAGIFTY) form a helical membrane-spanning segment. Topologically, residues 258 to 270 (MRPKSHRSTNHDK) are extracellular. A helical transmembrane segment spans residues 271–290 (VVSAFYTMFTPLLNPLIYSV). Residues 291–320 (RNSEVKEALKRWLGTCVNLKHQQNEAHRSR) are Cytoplasmic-facing.

This sequence belongs to the G-protein coupled receptor 1 family.

It localises to the cell membrane. Functionally, odorant receptor. This is Olfactory receptor 2T12 (OR2T12) from Homo sapiens (Human).